The following is a 363-amino-acid chain: Carbamoyl phosphate synthase small chain (363 aa).

The segment at 1 to 173 (MMKAFLVLDN…SKYIFGTHTG (173 aa)) is CPSase. Serine 46, glycine 225, and glycine 227 together coordinate L-glutamine. The Glutamine amidotransferase type-1 domain maps to 177–363 (KLAVYDYGVK…YDLVEKTKKG (187 aa)). Cysteine 253 functions as the Nucleophile in the catalytic mechanism. The L-glutamine site is built by leucine 254, glutamine 257, asparagine 295, glycine 297, and phenylalanine 298. Residues histidine 336 and glutamate 338 contribute to the active site.

This sequence belongs to the CarA family. In terms of assembly, composed of two chains; the small (or glutamine) chain promotes the hydrolysis of glutamine to ammonia, which is used by the large (or ammonia) chain to synthesize carbamoyl phosphate. Tetramer of heterodimers (alpha,beta)4.

The catalysed reaction is hydrogencarbonate + L-glutamine + 2 ATP + H2O = carbamoyl phosphate + L-glutamate + 2 ADP + phosphate + 2 H(+). It carries out the reaction L-glutamine + H2O = L-glutamate + NH4(+). It participates in amino-acid biosynthesis; L-arginine biosynthesis; carbamoyl phosphate from bicarbonate: step 1/1. It functions in the pathway pyrimidine metabolism; UMP biosynthesis via de novo pathway; (S)-dihydroorotate from bicarbonate: step 1/3. Its function is as follows. Small subunit of the glutamine-dependent carbamoyl phosphate synthetase (CPSase). CPSase catalyzes the formation of carbamoyl phosphate from the ammonia moiety of glutamine, carbonate, and phosphate donated by ATP, constituting the first step of 2 biosynthetic pathways, one leading to arginine and/or urea and the other to pyrimidine nucleotides. The small subunit (glutamine amidotransferase) binds and cleaves glutamine to supply the large subunit with the substrate ammonia. The protein is Carbamoyl phosphate synthase small chain of Leptospira interrogans serogroup Icterohaemorrhagiae serovar copenhageni (strain Fiocruz L1-130).